We begin with the raw amino-acid sequence, 260 residues long: Vesicle-associated membrane protein/synaptobrevin-binding protein (260 aa).

The Cytoplasmic segment spans residues 1–238 (MASHEQALIL…SPAPAAAVRA (238 aa)). An MSP domain is found at 7 to 125 (ALILEPAGEL…MDTKLRCVFE (119 aa)). A disordered region spans residues 127–177 (PDGSHQAPASDASRATDAGAHFSESALEDPTVASRKTETQSPKRVGAVGSA). Residues 172-216 (GAVGSAGEDVKKLQHELKKAQSEITSLKGENSQLKDEGIRLRKVA) adopt a coiled-coil conformation. The helical; Anchor for type IV membrane protein transmembrane segment at 239-259 (FPPVVYVVAAIILGLIIGKFL) threads the bilayer.

This sequence belongs to the VAMP-associated protein (VAP) (TC 9.B.17) family. Detected only in the central nervous system and the gill of aplysia.

It is found in the membrane. The protein resides in the synapse. It localises to the synaptosome. Required for neurotransmitter release. Interacts with VAMP. The protein is Vesicle-associated membrane protein/synaptobrevin-binding protein of Aplysia californica (California sea hare).